The following is a 750-amino-acid chain: Amyloid-beta A4 precursor protein-binding family A member 2 (750 aa).

2 disordered regions span residues M1–E94 and D143–T346. Residue S11 is modified to Phosphoserine. Polar residues predominate over residues G70–T80. Residues S81–E94 are compositionally biased toward acidic residues. The tract at residues H185–T271 is STXBP1-binding. A Phosphoserine modification is found at S209. Acidic residues predominate over residues D219–D228. Polar residues-rich tracts occupy residues L238–E248 and S332–P344. The PID domain occupies L367–D556. PDZ domains are found at residues E569 to S654 and T660 to A736.

In terms of assembly, part of a multimeric complex containing STXBP1 and syntaxin-1. Binds to the cytoplasmic domain of amyloid-beta protein, and to the nuclear factor NF-kappa-B/p65 via its PDZ domain. Interacts with the N-terminal domain of NECAB3. Specifically expressed in neurons, predominantly of the cerebellum, hippocampus, and spinal cord. Lesser extent in neurons of the cerebral cortex and anterior thalmic nuclei.

Functionally, putative function in synaptic vesicle exocytosis by binding to STXBP1, an essential component of the synaptic vesicle exocytotic machinery. May modulate processing of the amyloid-beta precursor protein (APP) and hence formation of APP-beta. In Mus musculus (Mouse), this protein is Amyloid-beta A4 precursor protein-binding family A member 2 (Apba2).